The sequence spans 575 residues: Glycine--tRNA ligase (575 aa).

Substrate is bound by residues Arg96 and Glu162. Residues 194–196, 204–209, 327–328, and 450–453 contribute to the ATP site; these read RNE, IRLREF, EC, and GIDR. 209-213 is a binding site for substrate; it reads FTQAE. A substrate-binding site is contributed by 446 to 450; sequence EPSYG.

Belongs to the class-II aminoacyl-tRNA synthetase family.

The protein localises to the cytoplasm. The enzyme catalyses tRNA(Gly) + glycine + ATP = glycyl-tRNA(Gly) + AMP + diphosphate. Its function is as follows. Catalyzes the attachment of glycine to tRNA(Gly). This is Glycine--tRNA ligase from Methanococcus maripaludis (strain C5 / ATCC BAA-1333).